A 305-amino-acid chain; its full sequence is Glycine--tRNA ligase alpha subunit (305 aa).

This sequence belongs to the class-II aminoacyl-tRNA synthetase family. Tetramer of two alpha and two beta subunits.

The protein resides in the cytoplasm. The catalysed reaction is tRNA(Gly) + glycine + ATP = glycyl-tRNA(Gly) + AMP + diphosphate. The sequence is that of Glycine--tRNA ligase alpha subunit from Streptococcus pneumoniae serotype 19F (strain G54).